The primary structure comprises 372 residues: Protein phosphatase 1 regulatory subunit 42 (372 aa).

7 LRR repeats span residues 30–51 (RITHLNFSNKNIDEVEDLTMCR), 52–71 (NLTVLYLYDNNINQIKNLGS), 72–93 (NLTHLYLQNNCISCIENLSGLK), 94–115 (RLEKLYLGGNCLTVVEGLEGLR), 116–137 (ELRELHIENQRLPPGEKLLFDP), 146–167 (SLSVLNISNNNIDELKDLAVLE), and 168–189 (NLTQFVAADNQLKEIKDLEFVL). Residues 203 to 241 (NPVCLKPKYREKVTIISKTLEILDGKEIKEMARQFLLNW) enclose the LRRCT domain.

It is found in the cytoplasm. The protein resides in the cytoskeleton. It localises to the microtubule organizing center. The protein localises to the centrosome. Functionally, may regulate phosphatase activity of protein phosphatase 1 (PP1) complexes. The protein is Protein phosphatase 1 regulatory subunit 42 (ppp1r42) of Xenopus laevis (African clawed frog).